Here is a 511-residue protein sequence, read N- to C-terminus: 2-isopropylmalate synthase (511 aa).

One can recognise a Pyruvate carboxyltransferase domain in the interval 5-267 (LIIFDTTLRD…DTDINATHIL (263 aa)). Mn(2+) contacts are provided by D14, H202, H204, and N238. Residues 392-511 (KLVSLKVCTE…ATNKAQHPQI (120 aa)) are regulatory domain.

Belongs to the alpha-IPM synthase/homocitrate synthase family. LeuA type 1 subfamily. As to quaternary structure, homodimer. It depends on Mn(2+) as a cofactor.

The protein localises to the cytoplasm. The catalysed reaction is 3-methyl-2-oxobutanoate + acetyl-CoA + H2O = (2S)-2-isopropylmalate + CoA + H(+). It participates in amino-acid biosynthesis; L-leucine biosynthesis; L-leucine from 3-methyl-2-oxobutanoate: step 1/4. Functionally, catalyzes the condensation of the acetyl group of acetyl-CoA with 3-methyl-2-oxobutanoate (2-ketoisovalerate) to form 3-carboxy-3-hydroxy-4-methylpentanoate (2-isopropylmalate). This Ruthia magnifica subsp. Calyptogena magnifica protein is 2-isopropylmalate synthase.